Reading from the N-terminus, the 990-residue chain is Pentatricopeptide repeat-containing protein At4g33170 (990 aa).

PPR repeat units lie at residues 73 to 107, 109 to 139, 144 to 178, 179 to 209, 210 to 244, 279 to 313, 314 to 348, 349 to 379, 380 to 414, 415 to 450, 451 to 477, 481 to 515, 516 to 550, 551 to 581, 582 to 616, 617 to 651, 652 to 682, 683 to 717, 718 to 753, and 754 to 788; these read ERFL…DLVS, NSIL…LRQD, SRMT…GLDG, DEFV…MPYR, DVVL…GLNP, EIIF…DVEC, DQVT…GLDL, MLTV…MSER, DLIS…GLKP, DQYT…NNVS, DSFV…LFER, DLVA…GERS, DDFT…GYDL, DLWV…IPVP, DDVA…GVLP, DEFT…NCTN, DPFV…IEMM, NITA…GIKP, DKVT…GIKP, and EIEH…ASAS. The segment at 789 to 864 is type E motif; it reads MYRTLLAACR…DPGFSWIEVK (76 aa). The interval 865 to 895 is type E(+) motif; it reads NKIHIFVVDDRSNRQTELIYRKVKDMIRDIK. A type DYW motif region spans residues 896–990; the sequence is QEGYVPETDF…DGICSCGDYW (95 aa).

It belongs to the PPR family. PCMP-H subfamily.

The chain is Pentatricopeptide repeat-containing protein At4g33170 (PCMP-H53) from Arabidopsis thaliana (Mouse-ear cress).